Reading from the N-terminus, the 258-residue chain is Cytochrome P450 1A2 (258 aa).

Belongs to the cytochrome P450 family. It depends on heme as a cofactor.

The protein resides in the endoplasmic reticulum membrane. It localises to the microsome membrane. The catalysed reaction is an organic molecule + reduced [NADPH--hemoprotein reductase] + O2 = an alcohol + oxidized [NADPH--hemoprotein reductase] + H2O + H(+). Its function is as follows. Cytochromes P450 are a group of heme-thiolate monooxygenases. In liver microsomes, this enzyme is involved in an NADPH-dependent electron transport pathway. It oxidizes a variety of structurally unrelated compounds, including steroids, fatty acids, and xenobiotics. This chain is Cytochrome P450 1A2 (CYP1A2), found in Gallus gallus (Chicken).